The following is a 343-amino-acid chain: Probable dual-specificity RNA methyltransferase RlmN (343 aa).

The Proton acceptor role is filled by Glu-91. Residues 97 to 327 (YKHGNSICVS…TTIRREMGSD (231 aa)) enclose the Radical SAM core domain. Cys-104 and Cys-332 are disulfide-bonded. [4Fe-4S] cluster contacts are provided by Cys-111, Cys-115, and Cys-118. S-adenosyl-L-methionine-binding positions include 158 to 159 (GE), Ser-190, 213 to 215 (SLH), and Asn-289. The S-methylcysteine intermediate role is filled by Cys-332.

This sequence belongs to the radical SAM superfamily. RlmN family. [4Fe-4S] cluster is required as a cofactor.

It is found in the cytoplasm. The catalysed reaction is adenosine(2503) in 23S rRNA + 2 reduced [2Fe-2S]-[ferredoxin] + 2 S-adenosyl-L-methionine = 2-methyladenosine(2503) in 23S rRNA + 5'-deoxyadenosine + L-methionine + 2 oxidized [2Fe-2S]-[ferredoxin] + S-adenosyl-L-homocysteine. It catalyses the reaction adenosine(37) in tRNA + 2 reduced [2Fe-2S]-[ferredoxin] + 2 S-adenosyl-L-methionine = 2-methyladenosine(37) in tRNA + 5'-deoxyadenosine + L-methionine + 2 oxidized [2Fe-2S]-[ferredoxin] + S-adenosyl-L-homocysteine. Specifically methylates position 2 of adenine 2503 in 23S rRNA and position 2 of adenine 37 in tRNAs. The sequence is that of Probable dual-specificity RNA methyltransferase RlmN from Clostridium novyi (strain NT).